The chain runs to 87 residues: Acylphosphatase (87 aa).

The Acylphosphatase-like domain maps to 1 to 87 (MAWVHGRVQG…EDYQDFRIRY (87 aa)). Residues arginine 14 and asparagine 32 contribute to the active site.

Belongs to the acylphosphatase family.

It catalyses the reaction an acyl phosphate + H2O = a carboxylate + phosphate + H(+). The sequence is that of Acylphosphatase (acyP) from Cronobacter sakazakii (strain ATCC BAA-894) (Enterobacter sakazakii).